A 368-amino-acid polypeptide reads, in one-letter code: Biglycan (368 aa).

Residues 1-16 form the signal peptide; the sequence is MWPLWRLVSLLALSQA. Residues 17 to 37 constitute a propeptide that is removed on maturation; it reads LPFEQRGFWDFTLDDGPFMMN. S42 and S47 each carry an O-linked (Xyl...) (glycosaminoglycan) serine glycan. Disulfide bonds link C63/C69 and C67/C76. 12 LRR repeats span residues 82 to 102, 103 to 126, 127 to 150, 151 to 171, 172 to 195, 196 to 220, 221 to 241, 242 to 265, 266 to 289, 290 to 312, 313 to 342, and 343 to 368; these read KSVPKEISPDTTLLDLQNNDI, SELRKDDFKGLQHLYALVLVNNKI, SKIHEKAFSPLRKLQKLYISKNHL, VEIPPNLPSSLVELRIHDNRI, RKVPKGVFSGLRNMNCIEMGGNPL, ENSGFEPGAFDGLKLNYLRISEAKL, TGIPKDLPETLNELHLDHNKI, QAIELEDLLRYSKLYRLGLGHNQI, RMIENGSLSFLPTLRELHLDNNKL, ARVPSGLPDLKLLQVVYLHSNNI, TKVGVNDFCPMGFGVKRAYYNGISLFNNPV, and PYWEVQPATFRCVTDRLAIQFGNYKK. Residues S180 and S198 are each glycosylated (O-linked (Xyl...) (glycosaminoglycan) serine). N-linked (GlcNAc...) asparagine glycans are attached at residues N270 and N311. Cysteines 321 and 354 form a disulfide.

Belongs to the small leucine-rich proteoglycan (SLRP) family. SLRP class I subfamily. As to quaternary structure, homodimer. Forms a ternary complex with MFAP2 and ELN. The two attached glycosaminoglycan chains can be either chondroitin sulfate or dermatan sulfate. Detected in placenta (at protein level). Found in several connective tissues, especially in articular cartilages.

Its subcellular location is the secreted. It is found in the extracellular space. It localises to the extracellular matrix. Its function is as follows. May be involved in collagen fiber assembly. This Homo sapiens (Human) protein is Biglycan (BGN).